Reading from the N-terminus, the 466-residue chain is Putative outer membrane protein NMB0088 (466 aa).

The first 24 residues, 1 to 24, serve as a signal peptide directing secretion; the sequence is MTPSALKKTVLLLGTAFAAASVHA.

It belongs to the OmpP1/FadL family.

The protein resides in the cell outer membrane. This Neisseria meningitidis serogroup B (strain ATCC BAA-335 / MC58) protein is Putative outer membrane protein NMB0088.